A 160-amino-acid polypeptide reads, in one-letter code: Cytochrome c-type biogenesis protein CcmE (160 aa).

Topologically, residues 1–8 (MNPRRKKR) are cytoplasmic. The helical; Signal-anchor for type II membrane protein transmembrane segment at 9–29 (LGIILAIFFGISATVGLMVYA) threads the bilayer. Over 30-160 (LNQNMDLFYT…TTEQKEGNAQ (131 aa)) the chain is Periplasmic. Positions 128 and 132 each coordinate heme.

Belongs to the CcmE/CycJ family.

The protein localises to the cell inner membrane. Its function is as follows. Heme chaperone required for the biogenesis of c-type cytochromes. Transiently binds heme delivered by CcmC and transfers the heme to apo-cytochromes in a process facilitated by CcmF and CcmH. This chain is Cytochrome c-type biogenesis protein CcmE, found in Vibrio atlanticus (strain LGP32) (Vibrio splendidus (strain Mel32)).